The following is a 1492-amino-acid chain: Neogenin (1492 aa).

Residues 1-36 (MAAEREAGRLLCTSSSRRCCPPPPLLLLLPLLLLLG) form the signal peptide. At 37 to 1136 (RPASGAAATK…PTSPLDSNML (1100 aa)) the chain is on the extracellular side. 4 Ig-like C2-type domains span residues 63–158 (PFYF…AKLT), 163–249 (PRFT…AELK), 254–347 (PEEI…AELT), and 352–437 (PGFL…AQLI). The N-linked (GlcNAc...) asparagine glycan is linked to Asn84. 3 disulfides stabilise this stretch: Cys85–Cys140, Cys184–Cys232, and Cys281–Cys331. The N-linked (GlcNAc...) asparagine glycan is linked to Asn221. Asn337 carries N-linked (GlcNAc...) asparagine glycosylation. The cysteines at positions 373 and 421 are disulfide-linked. Fibronectin type-III domains follow at residues 472–566 (APRD…TQPE), 572–662 (PAPN…TLSD), 667–762 (APQN…TFES), 772–862 (VPSS…RPHT), 887–986 (PPVG…LVPT), and 988–1085 (PPKD…TPKA). N-linked (GlcNAc...) asparagine glycans are attached at residues Asn501 and Asn520. N-linked (GlcNAc...) asparagine glycosylation is found at Asn670 and Asn746. N-linked (GlcNAc...) asparagine glycosylation occurs at Asn940. The disordered stretch occupies residues 1072-1128 (GPMSEAVQFRTPKADSSDKMPNDQALGSAGKGSRLPDLGSDYKPPMSGSNSPHGSPT). Residues 1083 to 1092 (PKADSSDKMP) are compositionally biased toward basic and acidic residues. The span at 1118–1128 (SGSNSPHGSPT) shows a compositional bias: polar residues. The chain crosses the membrane as a helical span at residues 1137-1157 (LVIIVSVGVITIVVVVVIAVF). At 1158-1492 (CTRRTTSHQK…MKDLNAITTA (335 aa)) the chain is on the cytoplasmic side. Disordered stretches follow at residues 1205 to 1237 (PIDKSPDPNPVMTDTPIPRNSQDITPVDNSMDS), 1266 to 1300 (PKMMMPFDSQPPQPVISAHPIHSLDNPHHHFHSSS), and 1321 to 1396 (SMSL…FAVP). Residues Ser1209 and Ser1225 each carry the phosphoserine modification. Polar residues predominate over residues 1222-1237 (PRNSQDITPVDNSMDS). At Thr1229 the chain carries Phosphothreonine. Composition is skewed to polar residues over residues 1321 to 1353 (SMSLSDRANSTESVRNTPSTDTMPASSSQTCCT) and 1361 to 1380 (ATSSSYLASSQEEDSGQSLP). Ser1432 is subject to Phosphoserine. Thr1435 is subject to Phosphothreonine. Residues Ser1463, Ser1465, and Ser1466 each carry the phosphoserine modification.

The protein belongs to the immunoglobulin superfamily. DCC family. As to quaternary structure, interacts with BMP2, BMP4, BMP6, and BMP7. Interacts with RGMA and RGMB. Interacts with MYO10. Widely expressed.

Its subcellular location is the cell membrane. Its function is as follows. Multi-functional cell surface receptor regulating cell adhesion in many diverse developmental processes, including neural tube and mammary gland formation, myogenesis and angiogenesis. Receptor for members of the BMP, netrin, and repulsive guidance molecule (RGM) families. Netrin-Neogenin interactions result in a chemoattractive axon guidance response and cell-cell adhesion, the interaction between NEO1/Neogenin and RGMa and RGMb induces a chemorepulsive response. This is Neogenin from Mus musculus (Mouse).